Consider the following 421-residue polypeptide: Galactooligosaccharide-binding protein (421 aa).

Positions 1–22 are cleaved as a signal peptide; that stretch reads MKMAKKCSVFMLCAAVSLSLAA. Residue Cys23 is the site of N-palmitoyl cysteine attachment. Residue Cys23 is the site of S-diacylglycerol cysteine attachment. The tract at residues 393–421 is disordered; sequence ATGKADPKQALDQAAETAKGQIKAKHSGK.

It belongs to the bacterial solute-binding protein 1 family. In terms of assembly, the complex is composed of two ATP-binding proteins (MsmX), two transmembrane proteins (GanP and GanQ) and a solute-binding protein (GanS).

It localises to the cell membrane. Its function is as follows. Involved in galactan degradation. Part of the ABC transporter complex GanPQS involved in the uptake of galactooligosaccharides. Binds mainly galactotetraose and galactotriose. This Bacillus subtilis (strain 168) protein is Galactooligosaccharide-binding protein.